The sequence spans 151 residues: D-aminoacyl-tRNA deacylase (151 aa).

A Gly-cisPro motif, important for rejection of L-amino acids motif is present at residues 136 to 137 (GP).

Belongs to the DTD family. Homodimer.

It is found in the cytoplasm. The enzyme catalyses glycyl-tRNA(Ala) + H2O = tRNA(Ala) + glycine + H(+). It catalyses the reaction a D-aminoacyl-tRNA + H2O = a tRNA + a D-alpha-amino acid + H(+). Its function is as follows. An aminoacyl-tRNA editing enzyme that deacylates mischarged D-aminoacyl-tRNAs. Also deacylates mischarged glycyl-tRNA(Ala), protecting cells against glycine mischarging by AlaRS. Acts via tRNA-based rather than protein-based catalysis; rejects L-amino acids rather than detecting D-amino acids in the active site. By recycling D-aminoacyl-tRNA to D-amino acids and free tRNA molecules, this enzyme counteracts the toxicity associated with the formation of D-aminoacyl-tRNA entities in vivo and helps enforce protein L-homochirality. This is D-aminoacyl-tRNA deacylase from Streptococcus gordonii (strain Challis / ATCC 35105 / BCRC 15272 / CH1 / DL1 / V288).